Consider the following 486-residue polypeptide: tRNA sulfurtransferase (486 aa).

Residues 60-166 enclose the THUMP domain; the sequence is QKICAMLINI…DNQLFIIIKR (107 aa). ATP contacts are provided by residues 184-185, K266, G288, and Q297; that span reads LI. An intrachain disulfide couples C345 to C458. Residues 406 to 484 form the Rhodanese domain; that stretch reads LDSTDVVLDI…GFSNVKIYRP (79 aa). C458 acts as the Cysteine persulfide intermediate in catalysis.

Belongs to the ThiI family.

It is found in the cytoplasm. It catalyses the reaction [ThiI sulfur-carrier protein]-S-sulfanyl-L-cysteine + a uridine in tRNA + 2 reduced [2Fe-2S]-[ferredoxin] + ATP + H(+) = [ThiI sulfur-carrier protein]-L-cysteine + a 4-thiouridine in tRNA + 2 oxidized [2Fe-2S]-[ferredoxin] + AMP + diphosphate. The enzyme catalyses [ThiS sulfur-carrier protein]-C-terminal Gly-Gly-AMP + S-sulfanyl-L-cysteinyl-[cysteine desulfurase] + AH2 = [ThiS sulfur-carrier protein]-C-terminal-Gly-aminoethanethioate + L-cysteinyl-[cysteine desulfurase] + A + AMP + 2 H(+). The protein operates within cofactor biosynthesis; thiamine diphosphate biosynthesis. Its function is as follows. Catalyzes the ATP-dependent transfer of a sulfur to tRNA to produce 4-thiouridine in position 8 of tRNAs, which functions as a near-UV photosensor. Also catalyzes the transfer of sulfur to the sulfur carrier protein ThiS, forming ThiS-thiocarboxylate. This is a step in the synthesis of thiazole, in the thiamine biosynthesis pathway. The sulfur is donated as persulfide by IscS. The sequence is that of tRNA sulfurtransferase from Blochmanniella pennsylvanica (strain BPEN).